The following is a 104-amino-acid chain: Integration host factor subunit beta (104 aa).

The protein belongs to the bacterial histone-like protein family. As to quaternary structure, heterodimer of an alpha and a beta chain.

Its function is as follows. This protein is one of the two subunits of integration host factor, a specific DNA-binding protein that functions in genetic recombination as well as in transcriptional and translational control. The protein is Integration host factor subunit beta of Xylella fastidiosa (strain M23).